A 185-amino-acid chain; its full sequence is MECLQQDTWAEVEQVQEEQQEEENAVSANAQRVSITQAAKLHNVTRQAIYVAIKQKKLKASKTTRWEIDLQDLEDYRRNRYSRAKSTYQGELLFDNEKGFYSVGQVASMLNVPEQKIYYATRIGAMKGERRGSAWVIHVSEVDRYRNDYLKKEAERKGKNLSAMREGFGTLGASELLADSEDFVS.

Belongs to the EUO family.

This is an uncharacterized protein from Chlamydia muridarum (strain MoPn / Nigg).